The chain runs to 821 residues: LPS-assembly protein LptD (821 aa).

Residues 1–20 (MGKRLFWTALSGLMVSAAHA) form the signal peptide.

It belongs to the LptD family. In terms of assembly, component of the lipopolysaccharide transport and assembly complex. Interacts with LptE and LptA.

It localises to the cell outer membrane. Together with LptE, is involved in the assembly of lipopolysaccharide (LPS) at the surface of the outer membrane. The sequence is that of LPS-assembly protein LptD from Chromohalobacter salexigens (strain ATCC BAA-138 / DSM 3043 / CIP 106854 / NCIMB 13768 / 1H11).